Consider the following 335-residue polypeptide: Phosphate acyltransferase (335 aa).

It belongs to the PlsX family. Homodimer. Probably interacts with PlsY.

It localises to the cytoplasm. The enzyme catalyses a fatty acyl-[ACP] + phosphate = an acyl phosphate + holo-[ACP]. It functions in the pathway lipid metabolism; phospholipid metabolism. In terms of biological role, catalyzes the reversible formation of acyl-phosphate (acyl-PO(4)) from acyl-[acyl-carrier-protein] (acyl-ACP). This enzyme utilizes acyl-ACP as fatty acyl donor, but not acyl-CoA. This chain is Phosphate acyltransferase, found in Clostridium botulinum (strain Langeland / NCTC 10281 / Type F).